The sequence spans 537 residues: Small conductance calcium-activated potassium channel protein 1 (537 aa).

Residues 1-10 (MSSHSHNGSV) show a composition bias toward polar residues. The segment at 1-90 (MSSHSHNGSV…GKPPTVSHRL (90 aa)) is disordered. The span at 65–76 (QEEEEEEEEEED) shows a compositional bias: acidic residues. Residues 108-128 (LIFGMFGIVVMVTETELSWGV) traverse the membrane as a helical segment. The helical transmembrane segment at 137–157 (FALKCLISLSTVILLGLVILY) threads the bilayer. Residues 176-196 (IAMTWERVSLISLELVVCAIH) form a helical membrane-spanning segment. A helical membrane pass occupies residues 225 to 245 (VLLSIPMFLRLYLLARVMLLH). The chain crosses the membrane as a helical span at residues 274 to 294 (LMTICPGTVLLVFSVSSWIVA). The segment at residues 314 to 334 (FLGAMWLISITFLSIGYGDMV) is an intramembrane region (pore-forming). The segment at 343–363 (VCLLTGIMGAGCTALVVAVVA) is segment S6. The calmodulin-binding stretch occupies residues 381–460 (DTQLTKRVKN…LAELAKAQSI (80 aa)).

This sequence belongs to the potassium channel KCNN family. KCa2.1/KCNN1 subfamily. As to quaternary structure, homodimer. Heteromultimer with KCNN2 and KCNN3. The complex is composed of 4 channel subunits each of which binds to a calmodulin subunit which regulates the channel activity through calcium-binding. Interacts with calmodulin. As to expression, highest expression in brain and liver with lower levels in heart, testis, kidney and colon. In colon, detected in smooth muscle cells. Expressed in atrial and ventricular myocytes with higher levels in atrial myocytes.

The protein localises to the membrane. The protein resides in the cytoplasm. It localises to the myofibril. Its subcellular location is the sarcomere. It is found in the z line. The catalysed reaction is K(+)(in) = K(+)(out). With respect to regulation, inhibited by bee venom neurotoxin apamin. Inhibited by d-tubocurarine and tetraethylammonium (TEA). Its function is as follows. Small conductance calcium-activated potassium channel that mediates the voltage-independent transmembrane transfer of potassium across the cell membrane through a constitutive interaction with calmodulin which binds the intracellular calcium allowing its opening. The current is characterized by a voltage-independent activation, an intracellular calcium concentration increase-dependent activation and a single-channel conductance of about 3 picosiemens. Also presents an inwardly rectifying current, thus reducing its already small outward conductance of potassium ions, which is particularly the case when the membrane potential displays positive values, above + 20 mV. Activation is followed by membrane hyperpolarization. Thought to regulate neuronal excitability by contributing to the slow component of synaptic afterhyperpolarization. This Mus musculus (Mouse) protein is Small conductance calcium-activated potassium channel protein 1.